We begin with the raw amino-acid sequence, 246 residues long: MSGHSKWHNIQAKKGKNDAAKGRIFTKIGRELILAARDGGSNPDTNAKLRDVIAKAKAANMPNDTIDRAIKKGAGELEGITYEEIVYEGYAPGGVAVMVKCLTDNRNRSAASVRHKFDKYGGNLGANGCVSYMFQRKGQLVIEKTDEIDEDELMMQALEAGAEDFSAEEEVFEITTDPEDFSAVREELEKNGYTFLEADVTMIPDVMAAVDMETAPKTQKLLDMLEEDDDVQDVYHNAEYPEEFEG.

It belongs to the TACO1 family.

The protein localises to the cytoplasm. This chain is Probable transcriptional regulatory protein NT01CX_1819, found in Clostridium novyi (strain NT).